Here is a 217-residue protein sequence, read N- to C-terminus: Homologous-pairing protein 2 homolog (217 aa).

Residues L89–L117 are interaction with NR3C1, homodimerization and transcriptional activation almost abolished when missing. The stretch at I93–H153 forms a coiled coil. Positions T118–E182 are DNA-binding. The segment at T118–E182 is interaction with NR3C1 decreased when missing.

The protein belongs to the HOP2 family. In terms of assembly, forms a stable heterodimer with MND1. Interacts with PSMC3/TBP1. Interacts with the DNA-binding domain of the nuclear receptors NR3C1/GR, ESR2/ER-beta, THRB and RXRA. Post-translationally, phosphorylated by PKA, PKC and MAPK.

Its subcellular location is the nucleus. In terms of biological role, plays an important role in meiotic recombination. Stimulates DMC1-mediated strand exchange required for pairing homologous chromosomes during meiosis. The complex PSMC3IP/MND1 binds DNA, stimulates the recombinase activity of DMC1 as well as DMC1 D-loop formation from double-strand DNA. This complex stabilizes presynaptic RAD51 and DMC1 filaments formed on single strand DNA to capture double-strand DNA. This complex stimulates both synaptic and presynaptic critical steps in RAD51 and DMC1-promoted homologous pairing. May inhibit HIV-1 viral protein TAT activity and modulate the activity of proteasomes through association with PSMC3. Plays a role as a coactivator in nuclear receptor-mediated transcription. The polypeptide is Homologous-pairing protein 2 homolog (Psmc3ip) (Rattus norvegicus (Rat)).